A 332-amino-acid polypeptide reads, in one-letter code: Glycerol-3-phosphate dehydrogenase [NAD(P)+] (332 aa).

NADPH is bound by residues Ser15, Trp16, and Lys110. Residues Lys110, Gly137, and Ser139 each coordinate sn-glycerol 3-phosphate. Residue Ala141 coordinates NADPH. Sn-glycerol 3-phosphate contacts are provided by Lys192, Asp245, Ser255, Arg256, and Asn257. Lys192 serves as the catalytic Proton acceptor. Residue Arg256 coordinates NADPH. Glu282 contacts NADPH.

It belongs to the NAD-dependent glycerol-3-phosphate dehydrogenase family.

Its subcellular location is the cytoplasm. The catalysed reaction is sn-glycerol 3-phosphate + NAD(+) = dihydroxyacetone phosphate + NADH + H(+). It carries out the reaction sn-glycerol 3-phosphate + NADP(+) = dihydroxyacetone phosphate + NADPH + H(+). Its pathway is membrane lipid metabolism; glycerophospholipid metabolism. In terms of biological role, catalyzes the reduction of the glycolytic intermediate dihydroxyacetone phosphate (DHAP) to sn-glycerol 3-phosphate (G3P), the key precursor for phospholipid synthesis. The sequence is that of Glycerol-3-phosphate dehydrogenase [NAD(P)+] from Coxiella burnetii (strain RSA 331 / Henzerling II).